Here is a 241-residue protein sequence, read N- to C-terminus: ATP synthase subunit a (241 aa).

The next 5 membrane-spanning stretches (helical) occupy residues 30-50 (GQIF…VLVG), 89-109 (LPFI…GALI), 128-148 (INTT…AGLS), 193-213 (LAVG…VMLL), and 214-234 (GLFT…FYIG).

The protein belongs to the ATPase A chain family. As to quaternary structure, F-type ATPases have 2 components, CF(1) - the catalytic core - and CF(0) - the membrane proton channel. CF(1) has five subunits: alpha(3), beta(3), gamma(1), delta(1), epsilon(1). CF(0) has four main subunits: a, b, b' and c.

The protein localises to the cellular thylakoid membrane. In terms of biological role, key component of the proton channel; it plays a direct role in the translocation of protons across the membrane. In Synechococcus sp. (strain CC9311), this protein is ATP synthase subunit a.